The sequence spans 94 residues: Bacterial microcompartment shell protein PduA (94 aa).

The BMC domain occupies 5–89; sequence ALGMVETKGL…PHTDVEKILP (85 aa).

Belongs to the bacterial microcompartments protein family. In terms of assembly, homohexamer with a central pore of about 5.6 Angstroms in diameter. The hexamers pack against each other in arrays. Interacts with the N-terminus of PduP which targets PduP to the BMC. Modeling suggests PduC, PduD, PduE, PduL and PduP interact with a cleft formed by the C-terminal segments of 2 adjacent PduA subunits (on the BMC luminal side) in the hexamer.

It localises to the bacterial microcompartment. Its pathway is polyol metabolism; 1,2-propanediol degradation. Functionally, one of the major shell proteins of the bacterial microcompartment (BMC) dedicated to 1,2-propanediol (1,2-PD) degradation. At least one of PduA or PduJ is required for BMC assembly; it must be encoded as the first gene in the pdu operon. Not required for structural integrity of BMCs, it is required to mitigate propionaldehyde toxicity. Controls diffusion of 1,2-PD into and propionaldehyde out of the BMC shell; residue 40 is particularly important for pore permeability. Overexpression of this protein leads to aberrant filaments that extend the length of the cell, cross the cleavage furrow and impair division. The filaments form nanotubes with a hollow center. The isolated BMC shell component protein ratio for J:A:B':B:K:T:U is approximately 15:10:7:6:1:1:2. Edge residues (particularly Lys-26) are important for function and assembly of the BMC, and influence array formation by hexamers. Interaction with PduA allows encapsulation of at least PduP in BMCs. Probably also targets PduD to the BMC. PduA is probably the hub for binding multiple enzymes to the interior of the BMC; modeling suggests PduC, PduD, PduE, PduG, PduL and PduP are targeted to PduA. Its function is as follows. The 1,2-PD-specific bacterial microcompartment (BMC) concentrates low levels of 1,2-PD catabolic enzymes, concentrates volatile reaction intermediates thus enhancing pathway flux and keeps the level of toxic, mutagenic propionaldehyde low. In Salmonella typhimurium (strain LT2 / SGSC1412 / ATCC 700720), this protein is Bacterial microcompartment shell protein PduA.